The sequence spans 318 residues: ATP synthase gamma chain (318 aa).

This sequence belongs to the ATPase gamma chain family. As to quaternary structure, F-type ATPases have 2 components, CF(1) - the catalytic core - and CF(0) - the membrane proton channel. CF(1) has five subunits: alpha(3), beta(3), gamma(1), delta(1), epsilon(1). CF(0) has three main subunits: a, b and c.

It is found in the cell membrane. In terms of biological role, produces ATP from ADP in the presence of a proton gradient across the membrane. The gamma chain is believed to be important in regulating ATPase activity and the flow of protons through the CF(0) complex. The chain is ATP synthase gamma chain from Lactobacillus johnsonii (strain CNCM I-12250 / La1 / NCC 533).